The following is a 268-amino-acid chain: Mediator of RNA polymerase II transcription subunit 8 (268 aa).

The stretch at 1 to 28 (MQREEKQLEASLDALLSQVADLKNSLGS) forms a coiled coil. Residue S82 is modified to Phosphoserine. The stretch at 133–163 (ADAAQKQIQSLNKMCSNLLEKISKEERESES) forms a coiled coil. Residues 142–151 (SLNKMCSNLL) are interaction with the Elongin BC complex. Disordered regions lie at residues 156–176 (KEERESESGGLRPNKQTFNPT) and 193–268 (NWRP…PYQR). Positions 200-209 (SGPGQAGQPG) are enriched in gly residues. Polar residues predominate over residues 218-235 (SGLQQVQMAGAPSQQQPM).

This sequence belongs to the Mediator complex subunit 8 family. In terms of assembly, component of the Mediator complex, which is composed of MED1, MED4, MED6, MED7, MED8, MED9, MED10, MED11, MED12, MED13, MED13L, MED14, MED15, MED16, MED17, MED18, MED19, MED20, MED21, MED22, MED23, MED24, MED25, MED26, MED27, MED29, MED30, MED31, CCNC, CDK8 and CDC2L6/CDK11. The MED12, MED13, CCNC and CDK8 subunits form a distinct module termed the CDK8 module. Mediator containing the CDK8 module is less active than Mediator lacking this module in supporting transcriptional activation. Individual preparations of the Mediator complex lacking one or more distinct subunits have been variously termed ARC, CRSP, DRIP, PC2, SMCC and TRAP. May be part of a multisubunit E3 ubiquitin-protein ligase complex with the elongin BC complex (ELOB and ELOC), CUL2 and RBX1.

It localises to the nucleus. It functions in the pathway protein modification; protein ubiquitination. Functionally, component of the Mediator complex, a coactivator involved in the regulated transcription of nearly all RNA polymerase II-dependent genes. Mediator functions as a bridge to convey information from gene-specific regulatory proteins to the basal RNA polymerase II transcription machinery. Mediator is recruited to promoters by direct interactions with regulatory proteins and serves as a scaffold for the assembly of a functional preinitiation complex with RNA polymerase II and the general transcription factors. May play a role as a target recruitment subunit in E3 ubiquitin-protein ligase complexes and thus in ubiquitination and subsequent proteasomal degradation of target proteins. The sequence is that of Mediator of RNA polymerase II transcription subunit 8 (MED8) from Homo sapiens (Human).